Reading from the N-terminus, the 123-residue chain is Small ribosomal subunit protein uS12 (123 aa).

Residues 1–27 (MPTIQQLIRKPRQPKIKRSKSMHLQEC) are disordered. Residues 9 to 21 (RKPRQPKIKRSKS) are compositionally biased toward basic residues. Position 89 is a 3-methylthioaspartic acid (D89).

This sequence belongs to the universal ribosomal protein uS12 family. Part of the 30S ribosomal subunit. Contacts proteins S8 and S17. May interact with IF1 in the 30S initiation complex.

Functionally, with S4 and S5 plays an important role in translational accuracy. In terms of biological role, interacts with and stabilizes bases of the 16S rRNA that are involved in tRNA selection in the A site and with the mRNA backbone. Located at the interface of the 30S and 50S subunits, it traverses the body of the 30S subunit contacting proteins on the other side and probably holding the rRNA structure together. The combined cluster of proteins S8, S12 and S17 appears to hold together the shoulder and platform of the 30S subunit. The protein is Small ribosomal subunit protein uS12 of Roseobacter denitrificans (strain ATCC 33942 / OCh 114) (Erythrobacter sp. (strain OCh 114)).